The following is a 128-amino-acid chain: Azurin (128 aa).

The region spanning 1-128 (AECKVTVDST…AMMKGTVTLK (128 aa)) is the Plastocyanin-like domain. Residues Cys3 and Cys26 are joined by a disulfide bond. Cu cation is bound by residues His46, Cys112, His117, and Met121.

The protein localises to the periplasm. Transfers electrons from cytochrome c551 to cytochrome oxidase. The protein is Azurin of Pseudomonas fluorescens biotype C.